We begin with the raw amino-acid sequence, 332 residues long: Lipoyl synthase (332 aa).

[4Fe-4S] cluster is bound by residues Cys74, Cys79, Cys85, Cys100, Cys104, Cys107, and Ser314. In terms of domain architecture, Radical SAM core spans Cys85–Ser303.

It belongs to the radical SAM superfamily. Lipoyl synthase family. [4Fe-4S] cluster serves as cofactor.

It localises to the cytoplasm. It catalyses the reaction [[Fe-S] cluster scaffold protein carrying a second [4Fe-4S](2+) cluster] + N(6)-octanoyl-L-lysyl-[protein] + 2 oxidized [2Fe-2S]-[ferredoxin] + 2 S-adenosyl-L-methionine + 4 H(+) = [[Fe-S] cluster scaffold protein] + N(6)-[(R)-dihydrolipoyl]-L-lysyl-[protein] + 4 Fe(3+) + 2 hydrogen sulfide + 2 5'-deoxyadenosine + 2 L-methionine + 2 reduced [2Fe-2S]-[ferredoxin]. It participates in protein modification; protein lipoylation via endogenous pathway; protein N(6)-(lipoyl)lysine from octanoyl-[acyl-carrier-protein]: step 2/2. Catalyzes the radical-mediated insertion of two sulfur atoms into the C-6 and C-8 positions of the octanoyl moiety bound to the lipoyl domains of lipoate-dependent enzymes, thereby converting the octanoylated domains into lipoylated derivatives. In Polaromonas naphthalenivorans (strain CJ2), this protein is Lipoyl synthase.